A 715-amino-acid polypeptide reads, in one-letter code: MIYEGKAITVKALESGIVELKFDLKGESVNKFNRLTLNELRQAVDAIKADASVKGVIVSSGKDVFIVGADITEFVDNFKLPEAELVAGNLEANRIFSAFEDLEVPTVAAINGIALGGGLEMCLAADYRVMSTSAKIGLPEVKLGIYPGFGGTVRLPRLIGSDNAVEWIASGKENRAEDALKVGAVDAVVAPELLQAGALDLIKRAISGELDYKAKRQPKLEKLKLNAIEQMMAFETAKGFVAGQAGPNYPAPVEAIKTIQKAANFGRDKALEVEAAGFAKLAKTSVAESLIGLFLNDQELKRKAKAHDEIAHDVKQAAVLGAGIMGGGIAYQSAVKGTPILMKDIREEAIQLGLNEASKLLGNRVDKGRLTPAKMAEALNAIRPTLSYGDFANVDIVVEAVVENPKVKQAVLAEVEGQVKEDAILASNTSTISINLLAKALKRPENFVGMHFFNPVHMMPLVEVIRGEKSSEVAVATTVAYAKKMGKNPIVVNDCPGFLVNRVLFPYFGGFAKLVSAGVDFVRIDKVMEKFGWPMGPAYLMDVVGIDTGHHGRDVMAEGFPDRMKDERRSAVDALYEANRLGQKNGKGFYAYETDKRGKPKKVFDAAVLDVLKPIVFEQREVTDEDIINWMMVPLCLETVRCLEDGIVETAAEADMGLVYGIGFPPFRGGALRYIDSIGVAEFVALADQYADLGPLYHPTAKLREMAKNGQRFFN.

The enoyl-CoA hydratase/isomerase stretch occupies residues 1–190; sequence MIYEGKAITV…KVGAVDAVVA (190 aa). D297 lines the substrate pocket. Residues 312 to 715 form a 3-hydroxyacyl-CoA dehydrogenase region; it reads HDVKQAAVLG…MAKNGQRFFN (404 aa). NAD(+)-binding positions include M325, D344, 401–403, K408, and S430; that span reads VVE. H451 acts as the For 3-hydroxyacyl-CoA dehydrogenase activity in catalysis. N454 is a binding site for NAD(+). Positions 501 and 660 each coordinate substrate.

The protein in the N-terminal section; belongs to the enoyl-CoA hydratase/isomerase family. It in the C-terminal section; belongs to the 3-hydroxyacyl-CoA dehydrogenase family. As to quaternary structure, heterotetramer of two alpha chains (FadB) and two beta chains (FadA).

The enzyme catalyses a (3S)-3-hydroxyacyl-CoA + NAD(+) = a 3-oxoacyl-CoA + NADH + H(+). It carries out the reaction a (3S)-3-hydroxyacyl-CoA = a (2E)-enoyl-CoA + H2O. The catalysed reaction is a 4-saturated-(3S)-3-hydroxyacyl-CoA = a (3E)-enoyl-CoA + H2O. It catalyses the reaction (3S)-3-hydroxybutanoyl-CoA = (3R)-3-hydroxybutanoyl-CoA. The enzyme catalyses a (3Z)-enoyl-CoA = a 4-saturated (2E)-enoyl-CoA. It carries out the reaction a (3E)-enoyl-CoA = a 4-saturated (2E)-enoyl-CoA. It participates in lipid metabolism; fatty acid beta-oxidation. Involved in the aerobic and anaerobic degradation of long-chain fatty acids via beta-oxidation cycle. Catalyzes the formation of 3-oxoacyl-CoA from enoyl-CoA via L-3-hydroxyacyl-CoA. It can also use D-3-hydroxyacyl-CoA and cis-3-enoyl-CoA as substrate. The polypeptide is Fatty acid oxidation complex subunit alpha (Pseudomonas putida (Arthrobacter siderocapsulatus)).